A 785-amino-acid polypeptide reads, in one-letter code: Neutral ceramidase (785 aa).

Residues 1–35 form the signal peptide; the sequence is MEASSWLCYQARGFGSSRVWLWLLLALVLLNCSLV. A glycan (N-linked (GlcNAc...) asparagine) is linked at asparagine 31. Serine 359 (nucleophile) is an active-site residue. Asparagine 377, asparagine 675, and asparagine 685 each carry an N-linked (GlcNAc...) asparagine glycan.

It belongs to the neutral ceramidase family. In terms of tissue distribution, expressed in seedlings, with higher levels in roots than in shoots.

It localises to the secreted. It is found in the endoplasmic reticulum. Its subcellular location is the golgi apparatus. The enzyme catalyses an N-acylsphing-4-enine + H2O = sphing-4-enine + a fatty acid. With respect to regulation, enhanced activity in the presence of calcium, magnesium, manganese and zinc ions, but inhibited activity in the presence of iron ion. Hydrolyzes the sphingolipid ceramide into sphingosine and free fatty acid. Uses ceramide instead of phytoceramide as substrate. This is Neutral ceramidase from Oryza sativa subsp. japonica (Rice).